A 248-amino-acid polypeptide reads, in one-letter code: Putative glutamine amidotransferase-like protein C13C5.04 (248 aa).

The 205-residue stretch at 13 to 217 folds into the Glutamine amidotransferase type-1 domain; the sequence is PMVEITSAYG…VKVLRGTEVF (205 aa).

The sequence is that of Putative glutamine amidotransferase-like protein C13C5.04 from Schizosaccharomyces pombe (strain 972 / ATCC 24843) (Fission yeast).